The chain runs to 142 residues: MEIRVFRHDDFEEVITLWERCDLLRPWNDPEMDIERKLNHDPDLFLVAEVAGEVVGSIMGGYDGHRGAAYYLGVHPDYRGRGIANALISRLEKKLIARGCPKINLMVRGDNDAVISMYEKLEYEMQDSVLLLGKRLIEDQEY.

The 142-residue stretch at 1–142 folds into the N-acetyltransferase domain; that stretch reads MEIRVFRHDD…GKRLIEDQEY (142 aa).

The protein belongs to the acetyltransferase family. YpeA subfamily.

This Sodalis glossinidius (strain morsitans) protein is Acetyltransferase SG1711.